We begin with the raw amino-acid sequence, 298 residues long: MATKEEHVRKPDWLKIKLNTNENYIGLKKLMRENRLHTVCEEAKCPNIHECWAVRRTATFMILGSVCTRACRFCAVKTGLPTELDWQEPERVAESVRIMNLKHVVVTAVARDDLKDGGAAVFAETVRAIRRKNPFTTIEVLPSDMGGVYENLKILMDARPDILNHNIETVRRLTPRVRARATYERSLEFLRRAKELQPDIPTKSSIMVGLGETKEEIIEAMDDLRANHVDILTIGQYLQPTKKHLKVVKYYHPDEFQELKEIALSKGFSHCEAGPLVRSSYHADEQVSEAAKARQLKA.

Residues cysteine 40, cysteine 45, cysteine 51, cysteine 67, cysteine 71, cysteine 74, and serine 280 each coordinate [4Fe-4S] cluster. Residues 53–269 (AVRRTATFMI…KEIALSKGFS (217 aa)) enclose the Radical SAM core domain.

This sequence belongs to the radical SAM superfamily. Lipoyl synthase family. [4Fe-4S] cluster serves as cofactor.

Its subcellular location is the cytoplasm. The enzyme catalyses [[Fe-S] cluster scaffold protein carrying a second [4Fe-4S](2+) cluster] + N(6)-octanoyl-L-lysyl-[protein] + 2 oxidized [2Fe-2S]-[ferredoxin] + 2 S-adenosyl-L-methionine + 4 H(+) = [[Fe-S] cluster scaffold protein] + N(6)-[(R)-dihydrolipoyl]-L-lysyl-[protein] + 4 Fe(3+) + 2 hydrogen sulfide + 2 5'-deoxyadenosine + 2 L-methionine + 2 reduced [2Fe-2S]-[ferredoxin]. The protein operates within protein modification; protein lipoylation via endogenous pathway; protein N(6)-(lipoyl)lysine from octanoyl-[acyl-carrier-protein]. In terms of biological role, catalyzes the radical-mediated insertion of two sulfur atoms into the C-6 and C-8 positions of the octanoyl moiety bound to the lipoyl domains of lipoate-dependent enzymes, thereby converting the octanoylated domains into lipoylated derivatives. In Geobacillus kaustophilus (strain HTA426), this protein is Lipoyl synthase.